The following is a 559-amino-acid chain: BTB/POZ domain-containing protein At5g47800 (559 aa).

Residues 28–96 (NDLVIRINNT…CYDITINLSA (69 aa)) enclose the BTB domain. The 278-residue stretch at 199–476 (DWWTEDISDL…VQALFFDQES (278 aa)) folds into the NPH3 domain. Tyr-417 is modified (phosphotyrosine). The segment covering 477 to 489 (GSKGASSRSESQE) has biased composition (low complexity). 2 disordered regions span residues 477–502 (GSKG…TDEH) and 524–559 (EGCK…SRDR). Composition is skewed to basic and acidic residues over residues 492 to 502 (TRGKETPTDEH) and 524 to 541 (EGCK…DPKK).

This sequence belongs to the NPH3 family.

Its pathway is protein modification; protein ubiquitination. In terms of biological role, may act as a substrate-specific adapter of an E3 ubiquitin-protein ligase complex (CUL3-RBX1-BTB) which mediates the ubiquitination and subsequent proteasomal degradation of target proteins. The protein is BTB/POZ domain-containing protein At5g47800 of Arabidopsis thaliana (Mouse-ear cress).